Here is a 202-residue protein sequence, read N- to C-terminus: RPKLPHRHPEIIQNEQDSREKVLKERKFPSFALHTPREEYINELNRQRELLKEKQKDEHKEYLIEDPEQQESSSTSSSEEVVPINTEQKRIPREDMLYQHTLEQLRRLSKYNQLQLQAIYAQEQLIRMKENSQRKPMRVVNQEQAYFYLEPFQPSYQLDVYPYAAWFHPAQIMQHVAYSPFHDTAKLIASENSEKTDIIPEW.

Disordered regions lie at residues 1–25 (RPKL…VLKE) and 51–84 (LKEK…VVPI). Composition is skewed to basic and acidic residues over residues 16–25 (QDSREKVLKE) and 51–63 (LKEK…KEYL). S18 bears the Phosphoserine mark. Residues 70–80 (QESSSTSSSEE) are compositionally biased toward low complexity. Phosphoserine occurs at positions 72, 73, 74, 76, 77, and 78.

Belongs to the alpha-casein family. Mammary gland specific. Secreted in milk.

It is found in the secreted. In terms of biological role, important role in the capacity of milk to transport calcium phosphate. This Equus asinus (Donkey) protein is Alpha-S1-casein.